A 95-amino-acid polypeptide reads, in one-letter code: YcgL domain-containing protein Patl_2802 (95 aa).

The YcgL domain occupies 4-88 (LLCAVYKSSK…PEENLLKQHL (85 aa)).

The polypeptide is YcgL domain-containing protein Patl_2802 (Pseudoalteromonas atlantica (strain T6c / ATCC BAA-1087)).